Here is a 315-residue protein sequence, read N- to C-terminus: Ribosomal RNA small subunit methyltransferase H (315 aa).

S-adenosyl-L-methionine contacts are provided by residues 37–39, aspartate 57, phenylalanine 83, aspartate 105, and glutamine 112; that span reads GGH.

It belongs to the methyltransferase superfamily. RsmH family.

The protein resides in the cytoplasm. The enzyme catalyses cytidine(1402) in 16S rRNA + S-adenosyl-L-methionine = N(4)-methylcytidine(1402) in 16S rRNA + S-adenosyl-L-homocysteine + H(+). Specifically methylates the N4 position of cytidine in position 1402 (C1402) of 16S rRNA. The polypeptide is Ribosomal RNA small subunit methyltransferase H (Pseudomonas fluorescens (strain Pf0-1)).